We begin with the raw amino-acid sequence, 291 residues long: MNTLLFKRKGGNCGNESNIVSQGSPSSSNLPESPGTLDEKNLPRLPTPFARSLSTIPSYEQMKRTNKLPDYHLKIVVVGDGAVGKTCLLISYVQGTFPTDYIPTIFENYVTNIEGPNGQIIELALWDTAGQEEYSRLRPLSYTNADVLMVCYSVGSKTSLKNVEDLWFPEVKHFCPSTPIMLVGLKSDLYEADNLSDLVEPSSAESLAKRLGAFAHIQCSARLKENIDEVFETAIHTLLSDSLYAPREPTHTIKNPFKRNTTRSDIDSSTGDTSVSISGTKRLRKNKCIIM.

Polar residues predominate over residues Gly-14–Pro-31. The interval Gly-14–Leu-45 is disordered. Position 79-86 (Gly-79–Thr-86) interacts with GTP. Positions Tyr-101–Tyr-109 match the Effector region motif. Residues Asp-127–Gln-131 and Leu-185–Asp-188 each bind GTP. Residues Thr-250–Thr-273 form a disordered region. Residues Ser-264, Ser-268, and Ser-276 each carry the phosphoserine modification. Residue Cys-288 is modified to Cysteine methyl ester. Cys-288 carries S-farnesyl cysteine lipidation. The propeptide at Ile-289–Met-291 is removed in mature form.

It belongs to the small GTPase superfamily. Rho family. As to quaternary structure, interacts with BEM4.

It is found in the cell membrane. The catalysed reaction is GTP + H2O = GDP + phosphate + H(+). Its function is as follows. Plays an important role in cell growth. Required to keep the uninucleated state. May be involved in the organization of the cytoskeleton which affects microtubule functions. Most likely RHO3 and RHO4 of S.cerevisiae regulate partially overlapping but different pathways. The protein is GTP-binding protein RHO4 (RHO4) of Saccharomyces cerevisiae (strain ATCC 204508 / S288c) (Baker's yeast).